Reading from the N-terminus, the 454-residue chain is Elongation factor Tu, mitochondrial (454 aa).

A mitochondrion-targeting transit peptide spans 1–51; that stretch reads MASVVLRNPSSKRLVPFSSQIYSRCGASVTSSYSISHSIGGDDLSSSTFGT. A tr-type G domain is found at 65–261; the sequence is KPHVNVGTIG…AVDEYIPDPV (197 aa). The interval 74-81 is G1; sequence GHVDHGKT. 74–81 contacts GTP; sequence GHVDHGKT. Phosphothreonine is present on Thr-82. The G2 stretch occupies residues 115-119; that stretch reads GITIA. Residues 136 to 139 are G3; the sequence is DCPG. Residues 136–140 and 191–194 contribute to the GTP site; these read DCPGH and NKVD. Positions 191-194 are G4; sequence NKVD. The tract at residues 229 to 231 is G5; that stretch reads SAL.

It belongs to the TRAFAC class translation factor GTPase superfamily. Classic translation factor GTPase family. EF-Tu/EF-1A subfamily.

It localises to the mitochondrion. Functionally, this protein promotes the GTP-dependent binding of aminoacyl-tRNA to the A-site of ribosomes during protein biosynthesis. The sequence is that of Elongation factor Tu, mitochondrial (TUFA) from Arabidopsis thaliana (Mouse-ear cress).